We begin with the raw amino-acid sequence, 202 residues long: Transmembrane 4 L6 family member 4 (202 aa).

Over 1–9 (MCTGGCARC) the chain is Cytoplasmic. Residues 10 to 30 (LGGTLIPLAFFGFLANILLFF) form a helical membrane-spanning segment. Residues 31-45 (PGGKVIDDNDHLSQE) lie on the Extracellular side of the membrane. The helical transmembrane segment at 46-66 (IWFFGGILGSGVLMIFPALVF) threads the bilayer. Topologically, residues 67–93 (LGLKNNDCCGCCGNEGCGKRFAMFTST) are cytoplasmic. The chain crosses the membrane as a helical span at residues 94–114 (IFAVVGFLGAGYSFIISAISI). The Extracellular portion of the chain corresponds to 115–158 (NKGPKCLMANSTWGYPFHDGDYLNDEALWNKCREPLNVVPWNLT). Asn124 and Asn156 each carry an N-linked (GlcNAc...) asparagine glycan. Residues 159–179 (LFSILLVVGGIQMVLCAIQVV) traverse the membrane as a helical segment. At 180 to 202 (NGLLGTLCGDCQCCGCCGGDGPV) the chain is on the cytoplasmic side.

The protein belongs to the L6 tetraspanin family. Post-translationally, N-glycosylated. Glycosylation is required for the growth inhibitory effect. As to expression, jejunum and liver.

It is found in the membrane. Its function is as follows. Regulates the adhesive and proliferative status of intestinal epithelial cells. Can mediate density-dependent cell proliferation. This is Transmembrane 4 L6 family member 4 (TM4SF4) from Homo sapiens (Human).